The chain runs to 91 residues: Small ribosomal subunit protein bS20 (91 aa).

Basic and acidic residues predominate over residues 1-18 (MPLHKSAEKRLRQSEKRN). Residues 1-24 (MPLHKSAEKRLRQSEKRNVRNRAR) are disordered.

Belongs to the bacterial ribosomal protein bS20 family.

Binds directly to 16S ribosomal RNA. In Chlorobium phaeobacteroides (strain DSM 266 / SMG 266 / 2430), this protein is Small ribosomal subunit protein bS20.